Consider the following 388-residue polypeptide: Succinate--CoA ligase [ADP-forming] subunit beta (388 aa).

The 236-residue stretch at 9-244 (KQLFAEYGLP…PSQDDPREAH (236 aa)) folds into the ATP-grasp domain. ATP-binding positions include K46, 53 to 55 (GRG), E99, T102, and E107. Mg(2+)-binding residues include N199 and D213. Residues N264 and 321-323 (GIV) each bind substrate.

The protein belongs to the succinate/malate CoA ligase beta subunit family. As to quaternary structure, heterotetramer of two alpha and two beta subunits. It depends on Mg(2+) as a cofactor.

The catalysed reaction is succinate + ATP + CoA = succinyl-CoA + ADP + phosphate. It carries out the reaction GTP + succinate + CoA = succinyl-CoA + GDP + phosphate. It participates in carbohydrate metabolism; tricarboxylic acid cycle; succinate from succinyl-CoA (ligase route): step 1/1. Its function is as follows. Succinyl-CoA synthetase functions in the citric acid cycle (TCA), coupling the hydrolysis of succinyl-CoA to the synthesis of either ATP or GTP and thus represents the only step of substrate-level phosphorylation in the TCA. The beta subunit provides nucleotide specificity of the enzyme and binds the substrate succinate, while the binding sites for coenzyme A and phosphate are found in the alpha subunit. The chain is Succinate--CoA ligase [ADP-forming] subunit beta from Stutzerimonas stutzeri (strain A1501) (Pseudomonas stutzeri).